Here is a 916-residue protein sequence, read N- to C-terminus: Bifunctional aspartokinase/homoserine dehydrogenase 2, chloroplastic (916 aa).

The N-terminal 87 residues, 1 to 87 (MATLKPSFTV…VDQVQIPKGE (87 aa)), are a transit peptide targeting the chloroplast. Positions 88-336 (MWSVHKFGGT…VNEAVILQTL (249 aa)) are aspartokinase. The tract at residues 337–562 (SYQEAWEMSY…LSRTTLAMGI (226 aa)) is interface. ACT domains lie at 412-487 (VEGT…VIPN) and 493-570 (AVGQ…LIGA). A homoserine dehydrogenase region spans residues 563-916 (VGPGLIGATL…RLASYLGAPS (354 aa)). NAD(+) is bound at residue I568. 4 residues coordinate NADP(+): I568, K600, T649, and K673. I568 is an NADPH binding site. T649 is a binding site for NAD(+). The NADPH site is built by T649 and K673. Residues E700, V703, A705, and L707 each coordinate Na(+). NADP(+) contacts are provided by G758 and E761. L-homoserine is bound by residues E761 and D772. Residue K776 is the Proton donor of the active site. G893 contributes to the NAD(+) binding site. Residue G893 participates in NADP(+) binding. G893 contributes to the NADPH binding site.

This sequence in the N-terminal section; belongs to the aspartokinase family. The protein in the C-terminal section; belongs to the homoserine dehydrogenase family. In terms of assembly, homo- or heterodimer. Requires a metal cation as cofactor.

The protein localises to the plastid. The protein resides in the chloroplast. It carries out the reaction L-homoserine + NADP(+) = L-aspartate 4-semialdehyde + NADPH + H(+). It catalyses the reaction L-homoserine + NAD(+) = L-aspartate 4-semialdehyde + NADH + H(+). The enzyme catalyses L-aspartate + ATP = 4-phospho-L-aspartate + ADP. It participates in amino-acid biosynthesis; L-lysine biosynthesis via DAP pathway; (S)-tetrahydrodipicolinate from L-aspartate: step 1/4. It functions in the pathway amino-acid biosynthesis; L-methionine biosynthesis via de novo pathway; L-homoserine from L-aspartate: step 1/3. Its pathway is amino-acid biosynthesis; L-methionine biosynthesis via de novo pathway; L-homoserine from L-aspartate: step 3/3. The protein operates within amino-acid biosynthesis; L-threonine biosynthesis; L-threonine from L-aspartate: step 1/5. It participates in amino-acid biosynthesis; L-threonine biosynthesis; L-threonine from L-aspartate: step 3/5. Its activity is regulated as follows. Threonine interaction with Gln-443 leads to inhibition of aspartate kinase activity and facilitates the binding of a second threonine on Gln-524, leading to a partial inhibition of homoserine dehydrogenase activity (25% of activity remaining at saturation with threonine). Homoserine dehydrogenase activity is also partially inhibited by cysteine (15% of activity remaining at saturation with cysteine). No synergy between threonine and cysteine for the inhibition. 13-fold activation of aspartate kinase activity by cysteine, isoleucine, valine, serine and alanine at 2.5 mM and 4-fold activation by leucine at 2.5 mM, but no activation of homoserine dehydrogenase activity. Functionally, bifunctional aspartate kinase and homoserine dehydrogenase that catalyzes the first and the third steps toward the synthesis of lysine, methionine and threonine from aspartate. The sequence is that of Bifunctional aspartokinase/homoserine dehydrogenase 2, chloroplastic (AKHSDH2) from Arabidopsis thaliana (Mouse-ear cress).